A 124-amino-acid polypeptide reads, in one-letter code: Ribonuclease pancreatic (124 aa).

The span at 1–13 shows a compositional bias: basic and acidic residues; sequence KESAAAKFERQHM. The disordered stretch occupies residues 1–23; sequence KESAAAKFERQHMDPSASSISSS. The substrate site is built by Lys-7 and Arg-10. His-12 serves as the catalytic Proton acceptor. Cystine bridges form between Cys-26-Cys-84, Cys-40-Cys-95, Cys-58-Cys-110, and Cys-65-Cys-72. Asn-34 carries an N-linked (GlcNAc...) asparagine glycan. Substrate-binding positions include 41 to 45, Lys-66, and Arg-85; that span reads KPVNT. His-119 acts as the Proton donor in catalysis.

Belongs to the pancreatic ribonuclease family. Monomer. Interacts with and forms tight 1:1 complexes with RNH1. Dimerization of two such complexes may occur. Interaction with RNH1 inhibits this protein. As to expression, pancreas.

It is found in the secreted. The catalysed reaction is an [RNA] containing cytidine + H2O = an [RNA]-3'-cytidine-3'-phosphate + a 5'-hydroxy-ribonucleotide-3'-[RNA].. It carries out the reaction an [RNA] containing uridine + H2O = an [RNA]-3'-uridine-3'-phosphate + a 5'-hydroxy-ribonucleotide-3'-[RNA].. In terms of biological role, endonuclease that catalyzes the cleavage of RNA on the 3' side of pyrimidine nucleotides. Acts on single-stranded and double-stranded RNA. This is Ribonuclease pancreatic (RNASE1) from Alces alces alces (European moose).